The sequence spans 423 residues: MSDRFEATYLIETPHDVASVAQELAGEQSTATSSRMPGETDALIRDFGARVEHIEALPPAEAPSLPVAHTLGQRVHRARLTLSWPLHNIGDSLPMLLTTLLGNQTGMRRLSGIRLERVAMPQSFIAAQPRPAFGIAGTRRLTGVQGRPLIGSIVKPNIGLAPEQTAAMARQLAEGGVDFIKDDELLANPPYSPVARRAALVLRALDEAAQRTGRRTMYAVNITDGLDEMRRHHDAVVQAGGTCIMVNLNSVGLSALLALRRHSQLPIHGHRAGWAMMTRCPALGMEFQPYQMLHRLAGVDHLHVSGLGGKFWEHADSVLQAAHECLTPLDTQAGAADDRALPVFSGGSTIFDVAPTYQGIGTADLIFASGGGIFGHPDGLAAGCASLRQAWEAAIAGQELRAYAQSRPELAAALARGKPVRKA.

Mg(2+) is bound by residues Lys181, Asp183, and Glu184. Lys181 is modified (N6-carboxylysine).

Belongs to the RuBisCO large chain family. Type IV subfamily. The cofactor is Mg(2+).

Its function is as follows. May be involved in sulfur metabolism and oxidative stress response. Does not show RuBisCO activity. This is an uncharacterized protein from Bordetella bronchiseptica (strain ATCC BAA-588 / NCTC 13252 / RB50) (Alcaligenes bronchisepticus).